The primary structure comprises 125 residues: Holo-[acyl-carrier-protein] synthase (125 aa).

Mg(2+) is bound by residues Asp-8 and Glu-57.

Belongs to the P-Pant transferase superfamily. AcpS family. The cofactor is Mg(2+).

It localises to the cytoplasm. It catalyses the reaction apo-[ACP] + CoA = holo-[ACP] + adenosine 3',5'-bisphosphate + H(+). In terms of biological role, transfers the 4'-phosphopantetheine moiety from coenzyme A to a Ser of acyl-carrier-protein. In Neisseria gonorrhoeae (strain ATCC 700825 / FA 1090), this protein is Holo-[acyl-carrier-protein] synthase.